The primary structure comprises 217 residues: 3,4-dihydroxy-2-butanone 4-phosphate synthase (217 aa).

D-ribulose 5-phosphate is bound by residues 37–38 (RE), Asp-42, 150–154 (RGGHT), and Glu-174. Glu-38 lines the Mg(2+) pocket. His-153 provides a ligand contact to Mg(2+).

It belongs to the DHBP synthase family. As to quaternary structure, homodimer. It depends on Mg(2+) as a cofactor. Mn(2+) serves as cofactor.

It carries out the reaction D-ribulose 5-phosphate = (2S)-2-hydroxy-3-oxobutyl phosphate + formate + H(+). The protein operates within cofactor biosynthesis; riboflavin biosynthesis; 2-hydroxy-3-oxobutyl phosphate from D-ribulose 5-phosphate: step 1/1. In terms of biological role, catalyzes the conversion of D-ribulose 5-phosphate to formate and 3,4-dihydroxy-2-butanone 4-phosphate. The sequence is that of 3,4-dihydroxy-2-butanone 4-phosphate synthase from Salmonella arizonae (strain ATCC BAA-731 / CDC346-86 / RSK2980).